Reading from the N-terminus, the 341-residue chain is MKTATLLAALSVLAGALAAPLAGDSALHRRSLPRLGGVNLAGCDFGIDIYGNSGTPACPGTEQVGHFIADGANLFRLPAGWQYLVGNNQASTSLAPDFFAQYDALVQAVISKGAYAIIDVHNYARWNGAIIGQGGPSNQDFANLWTLLATKVTSNDPNVIFGLMNEPHDLDVSTWAGSVQAAVNAIRAAGATSQYILIPGTGFTNANAWFQGQDNALLGVTDPVGGTDKLLLDVHRYNDVDFSGTHAECTTNSLDVLSSLDSWLKGNGRKAIVSETGGGHTTSCETDLGEFLNGIKEDYPSVLGFAVWAAGSFDPSYVLSITPTNGVDNQLFDIAVKPNLP.

The first 16 residues, 1 to 16 (MKTATLLAALSVLAGA), serve as a signal peptide directing secretion. A propeptide spanning residues 17–30 (LAAPLAGDSALHRR) is cleaved from the precursor. The active-site Proton donor is Glu166. The Nucleophile role is filled by Glu275.

It belongs to the glycosyl hydrolase 5 (cellulase A) family.

The enzyme catalyses Endohydrolysis of (1-&gt;4)-beta-D-glucosidic linkages in cellulose, lichenin and cereal beta-D-glucans.. In terms of biological role, has endoglucanase activity on carboxymethyl-cellulose (CMC). This Saitozyma flava (Cryptococcus flavus) protein is Endoglucanase 1 (CMC1).